A 128-amino-acid polypeptide reads, in one-letter code: Cytochrome c' (128 aa).

Residues Q13, Q17, E69, T70, C118, C121, and H122 each coordinate heme c.

As to quaternary structure, homodimer. Post-translationally, binds 1 heme c group covalently per subunit.

In terms of biological role, cytochrome c' is the most widely occurring bacterial c-type cytochrome. Cytochromes c' are high-spin proteins and the heme has no sixth ligand. Their exact function is not known. This Magnetospirillum molischianum (Rhodospirillum molischianum) protein is Cytochrome c'.